We begin with the raw amino-acid sequence, 137 residues long: MLQPKRTKFRKQFKGSIKGLAKGGSDLNFGTYGLKAIEPERITARQIEAARRAMTRHMKRQGRVWIRIFPDVPVTAKPIEVRMGKGKGSVDRWAAKVKPGRVMFEIDGVNDDVAREALRLAAMKLPIKTRVVVREDW.

The protein belongs to the universal ribosomal protein uL16 family. In terms of assembly, part of the 50S ribosomal subunit.

Its function is as follows. Binds 23S rRNA and is also seen to make contacts with the A and possibly P site tRNAs. The polypeptide is Large ribosomal subunit protein uL16 (Roseobacter denitrificans (strain ATCC 33942 / OCh 114) (Erythrobacter sp. (strain OCh 114))).